We begin with the raw amino-acid sequence, 356 residues long: Guanine nucleotide-binding protein alpha-3 subunit (356 aa).

Positions 1–26 (MGACMSKNDEETEQKKRSQKIDRDLE) are disordered. A lipid anchor (N-myristoyl glycine) is attached at glycine 2. Cysteine 4 is lipidated: S-palmitoyl cysteine. Over residues 7–23 (KNDEETEQKKRSQKIDR) the composition is skewed to basic and acidic residues. The region spanning 34–356 (KECKILLLGS…NNALKDSGIL (323 aa)) is the G-alpha domain. The tract at residues 37–50 (KILLLGSGESGKST) is G1 motif. GTP-binding positions include 42–49 (GSGESGKS), 179–185 (LRARTKT), 204–208 (DVGGQ), 273–276 (NKVD), and alanine 328. Residues serine 49 and threonine 185 each contribute to the Mg(2+) site. The interval 177-185 (DVLRARTKT) is G2 motif. The G3 motif stretch occupies residues 200–209 (IHMFDVGGQR). A G4 motif region spans residues 269 to 276 (ILFLNKVD). The G5 motif stretch occupies residues 326–331 (TQATDT).

This sequence belongs to the G-alpha family. G(q) subfamily. In terms of assembly, g proteins are composed of 3 units; alpha, beta and gamma. The alpha chain contains the guanine nucleotide binding site.

Its function is as follows. Guanine nucleotide-binding proteins (G proteins) are involved as modulators or transducers in various transmembrane signaling systems. Involved in conidiation. The chain is Guanine nucleotide-binding protein alpha-3 subunit (gna-3) from Neurospora crassa (strain ATCC 24698 / 74-OR23-1A / CBS 708.71 / DSM 1257 / FGSC 987).